The primary structure comprises 366 residues: uncharacterized protein (366 aa).

6 helical membrane-spanning segments follow: residues 30–50 (FWTY…AVGI), 66–86 (IIIA…IIVI), 136–156 (IFIS…GYLA), 162–182 (IILF…LDLL), 198–218 (IGVV…IYDI), and 225–245 (YIPE…IIDV).

The protein resides in the cell membrane. This is an uncharacterized protein from Methanocaldococcus jannaschii (strain ATCC 43067 / DSM 2661 / JAL-1 / JCM 10045 / NBRC 100440) (Methanococcus jannaschii).